A 175-amino-acid polypeptide reads, in one-letter code: Gamma-crystallin A (175 aa).

Beta/gamma crystallin 'Greek key' domains follow at residues 2 to 40 (GKITFYEDRGFQGHCYQCSSNNCLQQPYFSRCNSIRVDV) and 41 to 83 (HSWF…RLIP). The interval 84–88 (QHTGT) is connecting peptide. Beta/gamma crystallin 'Greek key' domains lie at 89–129 (FRMR…RVLE) and 130–172 (GSWV…RRVM).

Belongs to the beta/gamma-crystallin family.

Crystallins are the dominant structural components of the vertebrate eye lens. This is Gamma-crystallin A (CRYGA) from Bos taurus (Bovine).